Here is a 142-residue protein sequence, read N- to C-terminus: MAKIKDDCIELELTPRRYQELDDDPFILSVFELLENKKAVVRDFSAVLLESEYKVLISGIETMIKGNQDSISLETIEPFLFLSIDQENGNYRIKIKIIFDDYKESKSNSNLFEINCNEEKLESFVTALKLNLENTKNPSKLP.

Immunity protein component of a toxin-immunity protein module, which functions as a cellular contact-dependent growth inhibition (CDI) system. Neutralizes the tRNase activity of cognate toxin WapA upon expression in E.coli. Does not inhibit WapA from other strains of B.subtilis. The WapA C-terminus cannot be expressed on its own in E.coli, however it can be cloned in the presence of its cognate immunity protein gene. Cell contact is necessary for growth inhibition. Unlike the LXG toxin-immunity modules, WapAI mediates competition under shaking culture conditions. The protein is Immunity protein WapI (wapI) of Bacillus subtilis (strain 168).